The following is a 782-amino-acid chain: MSVNSRKRKVATKAAPVQSSSDEELADGLLDGILSHSEDESEDDQDAEDTDASSVIEGLSDEDFEDEEDSGDEAEEIRKQMRNLNTSGGSQQRKTRQPAHERLDDGADGELEGEEDESLKPNYTVTTDAHGQVRYLYKEIDPVYESDDSDAEATNTIGNIPLTYYDEYPHIGYDINGKKIMRPAKGEALDALLDSIDIPKGWTGLTDPQTGKPLNLSEEELDVLKRLTRNEVVEDGYDPYPEMVAYFSGKQEIMPLSAAPEPKRRFIPSKHEAKRVMKIVKAIREGRIKPYKAPEEREEDEQISYDVWADEKPRPEHSMHIPAPKLPPPGYEASYHPPPEYLPDKAEEEAWLQADEEDREKDFLPKNYEALRKVPGYETFVKERFERSLDLYLAPRVRRNRLNIDPESLLPKLPDPEDLKPFPTTCAAIFRGQEGRVRCVSVDPQGIFVASGGDDGYVRIWELLTGRQVWNAKLSDEEAVDAVQWRPTKDASVLAAASGEHVYLIVPFTLLSPDVEQSSRDVLDAGWGYATSKPSTAANGEAPKQSPGKWSRPGSRMENKGILVQIEVRSAVKIINWHRRGDYFATVSPRGQSTAVAIHTVSKHLTQLPFRRLKGIAQTAQFHPSKAIFFVATRNTIRSYDLAKQELVKILQPGAKWISSIDVHPGGDNIIVGTYDKRLLWHDLDLSNKPYKTLRFHKEAIRAVKFHQGGLPLFADASDDGSLQIFHGKVVDDLMENATIVPLKVLRGHKVKSRLGVMDLDWHPREPWCVSAGADGTLRLWN.

Residues 1-11 are compositionally biased toward basic residues; that stretch reads MSVNSRKRKVA. The disordered stretch occupies residues 1 to 120; it reads MSVNSRKRKV…LEGEEDESLK (120 aa). 2 stretches are compositionally biased toward acidic residues: residues 39 to 51 and 59 to 75; these read DESEDDQDAEDTD and LSDEDFEDEEDSGDEAE. Over residues 82-92 the composition is skewed to polar residues; it reads RNLNTSGGSQQ. The segment covering 106 to 117 has biased composition (acidic residues); the sequence is GADGELEGEEDE. WD repeat units follow at residues 432–471 and 475–516; these read GQEGRVRCVSVDPQGIFVASGGDDGYVRIWELLTGRQVWN and SDEE…PDVE. The tract at residues 533–556 is disordered; that stretch reads KPSTAANGEAPKQSPGKWSRPGSR. WD repeat units lie at residues 612 to 652, 653 to 692, 696 to 736, and 752 to 782; these read RLKG…KILQ, PGAKWISSIDVHPGGDNIIVGTYDKRLLWHDLDLSNKPYK, FHKE…DLME, and KSRLGVMDLDWHPREPWCVSAGADGTLRLWN.

The protein belongs to the WD repeat BOP1/ERB1 family. Component of the NOP7 complex, composed of ERB1, NOP7 and YTM1. The complex is held together by ERB1, which interacts with NOP7 via its N-terminal domain and with YTM1 via a high-affinity interaction between the seven-bladed beta-propeller domains of the 2 proteins. The NOP7 complex associates with the 66S pre-ribosome.

The protein resides in the nucleus. The protein localises to the nucleolus. Its subcellular location is the nucleoplasm. Its function is as follows. Component of the NOP7 complex, which is required for maturation of the 25S and 5.8S ribosomal RNAs and formation of the 60S ribosome. The polypeptide is Ribosome biogenesis protein ERB1 (Phaeosphaeria nodorum (strain SN15 / ATCC MYA-4574 / FGSC 10173) (Glume blotch fungus)).